Here is a 291-residue protein sequence, read N- to C-terminus: E3 ubiquitin-protein ligase RZFP34 (291 aa).

Residues 20–96 (IGSGHYGCSH…VQQNCSNCGV (77 aa)) form a CHY-type zinc finger. Residues Cys27, His29, Cys40, Cys41, Cys47, Cys50, His51, His66, Cys78, Cys81, Cys91, Cys94, Cys103, Cys106, His119, Cys120, Cys123, Cys126, His136, Cys137, Cys140, Cys143, His152, and Cys154 each contribute to the Zn(2+) site. The segment at 98–162 (MGKYFCSKCK…QCVEGAMHHN (65 aa)) adopts a CTCHY-type zinc-finger fold. Residues 163 to 206 (CPVCFEYLFDSTRDITVLRCGHTMHLECTKDMGLHNRYTCPVCS) form an RING-type; atypical zinc finger. A Phosphoserine modification is found at Ser173. Phosphothreonine is present on Thr178. Ser208 carries the phosphoserine modification. A disordered region spans residues 271 to 291 (QRGSDSHSCSSGMPQVVGSTG).

Interacts with SRK2D/2SNRK2.2, SRK2I/SNRK2.3 and SRK2E/SNRK2.6. In terms of processing, phosphorylated at Ser-173, Thr-178 and Ser-208 by SRK2E/SNRK2.6 in response to abscisic acid (ABA). Phosphorylation activates its E3 ubiquitin-protein ligase activity. In terms of tissue distribution, expressed in roots, leaves, and anthers and stigma of open flowers.

The protein resides in the nucleus. It localises to the cytoplasm. The protein localises to the endoplasmic reticulum. It carries out the reaction S-ubiquitinyl-[E2 ubiquitin-conjugating enzyme]-L-cysteine + [acceptor protein]-L-lysine = [E2 ubiquitin-conjugating enzyme]-L-cysteine + N(6)-ubiquitinyl-[acceptor protein]-L-lysine.. Its pathway is protein modification; protein ubiquitination. Functionally, possesses E3 ubiquitin-protein ligase activity in vitro. Mediates mainly 'Lys-48'-linked polyubiquitination. Promotes abscisic acid (ABA)-induced stomatal closure, reactive oxygen species (ROS) production and drought tolerance. Involved in the regulation of stomatal aperture. The sequence is that of E3 ubiquitin-protein ligase RZFP34 from Arabidopsis thaliana (Mouse-ear cress).